Here is a 369-residue protein sequence, read N- to C-terminus: Ribonuclease D (369 aa).

One can recognise a 3'-5' exonuclease domain in the interval 4–168 (EIITTTAQLH…CLEKLQQQLE (165 aa)). The HRDC domain maps to 207–286 (DRQGLAIIKA…TQVISQDEST (80 aa)).

Belongs to the RNase D family. A divalent metal cation is required as a cofactor.

The protein resides in the cytoplasm. The enzyme catalyses Exonucleolytic cleavage that removes extra residues from the 3'-terminus of tRNA to produce 5'-mononucleotides.. In terms of biological role, exonuclease involved in the 3' processing of various precursor tRNAs. Initiates hydrolysis at the 3'-terminus of an RNA molecule and releases 5'-mononucleotides. The chain is Ribonuclease D from Psychromonas ingrahamii (strain DSM 17664 / CCUG 51855 / 37).